A 231-amino-acid polypeptide reads, in one-letter code: Aquaporin Z (231 aa).

Helical transmembrane passes span 11 to 31 and 36 to 56; these read FLGT…AAAF and IGLL…AFAI. Residues 65–67 carry the NPA 1 motif; the sequence is NPA. Helical transmembrane passes span 84–104, 132–152, and 161–181; these read LPYI…LYLI, MISV…VILG, and GFAP…SIPI. Positions 187–189 match the NPA 2 motif; that stretch reads NPA. A helical transmembrane segment spans residues 203–223; sequence VSQLWLFWAAPIIGAILAGVI.

This sequence belongs to the MIP/aquaporin (TC 1.A.8) family. In terms of assembly, homotetramer.

The protein resides in the cell inner membrane. The catalysed reaction is H2O(in) = H2O(out). Channel that permits osmotically driven movement of water in both directions. It is involved in the osmoregulation and in the maintenance of cell turgor during volume expansion in rapidly growing cells. It mediates rapid entry or exit of water in response to abrupt changes in osmolarity. In Shewanella oneidensis (strain ATCC 700550 / JCM 31522 / CIP 106686 / LMG 19005 / NCIMB 14063 / MR-1), this protein is Aquaporin Z.